The following is a 351-amino-acid chain: Polycomb group RING finger protein 6 (351 aa).

Residues 1–114 (MEEAETDATE…FSLRLESGRA (114 aa)) form a disordered region. Positions 9-19 (TENKRASEAKR) are enriched in basic and acidic residues. The segment covering 24–37 (LPPPPPPISPPALI) has biased composition (pro residues). Serine 32 is subject to Phosphoserine. The segment covering 38 to 51 (PAPAAGEEGPASLA) has biased composition (low complexity). Over residues 62–80 (RPPELEPERSLGRLRGRFE) the composition is skewed to basic and acidic residues. Residues 69–110 (ERSLGRLRGRFEDYDEELEEDEEMEEEEEEEEEMSHFSLRLE) are a coiled coil. Acidic residues predominate over residues 81 to 101 (DYDEELEEDEEMEEEEEEEEE). Phosphoserine is present on serine 116. The RING-type zinc-finger motif lies at 135–174 (CSICKGYLIDATTITECLHTFCKSCIVRHFYYSNRCPKCN). Glycyl lysine isopeptide (Lys-Gly) (interchain with G-Cter in SUMO2) cross-links involve residues lysine 224 and lysine 235.

In terms of assembly, component of a PRC1-like complex. Interacts with BMI1/PCGF4, RING1 and RNF2. Interacts with KDM5D. Interacts with CBX4, CBX6, CBX7 and CBX8. In terms of processing, phosphorylated during mitosis.

It localises to the nucleus. Functionally, transcriptional repressor. May modulate the levels of histone H3K4Me3 by activating KDM5D histone demethylase. Component of a Polycomb group (PcG) multiprotein PRC1-like complex, a complex class required to maintain the transcriptionally repressive state of many genes, including Hox genes, throughout development. PcG PRC1 complex acts via chromatin remodeling and modification of histones; it mediates monoubiquitination of histone H2A 'Lys-119', rendering chromatin heritably changed in its expressibility. Within the PRC1-like complex, regulates RNF2 ubiquitin ligase activity. This is Polycomb group RING finger protein 6 (Pcgf6) from Rattus norvegicus (Rat).